The following is a 375-amino-acid chain: Aldehyde reductase FrzD (375 aa).

The FMN site is built by A61, Q103, and H171. Y176 (proton donor) is an active-site residue. The FMN site is built by K223, G294, and R319.

The protein belongs to the NADH:flavin oxidoreductase/NADH oxidase family. FMN is required as a cofactor.

The enzyme catalyses (1S,4S)-4-[(4-hydroxyphenyl)methyl]-2,5-diazaspiro[bicyclo[3.2.1]octane-6,1'-cyclohexane]-2',5'-dien-4'-one + 2 NADPH + 2 H(+) = (1S,4S)-4-[(4-hydroxyphenyl)methyl]-2,5-diazaspiro[bicyclo[3.2.1]octane-6,1'-cyclohexan]-4'-one + 2 NADP(+). It participates in alkaloid biosynthesis; ergot alkaloid biosynthesis. In terms of biological role, aldehyde reductase; part of the gene cluster that mediates the biosynthesis of the alkaloid (-)-FR901483, a potent immunosuppressant that shows efficacy in animal models and a probable inhibitor of purine nucleotide biosynthesis by targeting phosphoribosylpyrophosphate amidotransferase (PPAT). Within the pathway, FrzD reduces the dienone portion of the pathway intermediates to cyclohexanone. The biosynthesis of (-)-FR901483 starts with the condensation of two L-tyrosines to yield (S,S)-dityrosyl-piperazine. This process occurs in 3 steps with the non-canonical nonribosomal peptide synthetase FrzA catalyzing the reduction of L-tyrosine into L-tyrosinal, the spontaneous condensation of 2 L-tyrosinal units, and the subsequent reduction by the NmrA-like family domain-containing oxidoreductase FrzB. The cytochrome P450 monooxygenase FrzC then performs coupling between N10 and C1' to morph the piperazine into a 1,4-diazabicyclo[3.2.1]octane spiro-fused to a 2,5-cyclohexadienone. The dienone portion is further reduced to cyclohexanone by the flavin-dependent reductase FrzD. The methyltranserases (MTs) FrzE and FrzF are then involved in the methylation at the C10' amine and the C4 phenolic oxygen, respectively. The order of the two MTs appear to be interchangeable. Cleavage of the C9-N10' bond by the dioxygenase FrzG then leads to formation of a conjugated iminium. In addition to the oxidation of C9, an additional dehydrogenation between C7 and C8 can occur to give a likely shunt product. The next biosynthetic step is the intramolecular aldol condensation catalyzed by the newly identified aldolase FrzH to yield an aza-tricyclic product with the formation of a C9-C3' bond. The short-chain dehydrogenase/reductase FrzI then produces dephospho-(-)-FR901483 that is phosphorylated at C4'-OH into (-)-FR901483 by the phosphotransferase FrzJ. The only unassigned enzyme in the cluster is the second cytochrome P450 monooxygenase FrzL. This is Aldehyde reductase FrzD from Cladobotryum sp.